A 382-amino-acid chain; its full sequence is L-arabinitol 4-dehydrogenase (382 aa).

8 residues coordinate Zn(2+): cysteine 55, histidine 80, glutamate 81, cysteine 110, cysteine 113, cysteine 116, cysteine 124, and glutamate 165. NAD(+)-binding positions include 192-193 (PI), aspartate 213, arginine 218, isoleucine 293, and 317-319 (QYR).

This sequence belongs to the zinc-containing alcohol dehydrogenase family. In terms of assembly, homotetramer. The cofactor is Zn(2+).

It catalyses the reaction L-arabinitol + NAD(+) = L-xylulose + NADH + H(+). The protein operates within carbohydrate degradation; L-arabinose degradation via L-arabinitol; D-xylulose 5-phosphate from L-arabinose (fungal route): step 2/5. In terms of biological role, catalyzes the NAD-dependent oxidation of L-arabinitol to L-xylulose in the fungal L-arabinose catabolic pathway. L-arabinose catabolism is important for using plant material as a carbon source. Also active on ribitol and xylitol. Not active with NADP as cosubstrate. The chain is L-arabinitol 4-dehydrogenase (ladA) from Aspergillus oryzae (Yellow koji mold).